The sequence spans 1063 residues: MASTTPITMEDLQKALEAQSRALRAGLAAGASQSRRPRPPRQRDSSTSGDDSGRDSGGPRRRRGNRGRGQRKDWSRAPPPPEERQESRSQTPAPKPSRAPPQQPQPPRMQTGRGGSAPRPELGPPTNPFQAAVARGLRPPLHDPDTEAPTEACVTSWLWSEGEGAVFYRVDLHFTNLGTPPLDEDGRWDPALMYNPCGPEPPAHVVRAYNQPAGDVRGVWGKGERTYAEQDFRVGGTRWHRLLRMPVRGLDGDTAPLPPHTTERIETRSARHPWRIRFGAPQAFLAGLLLAAVAVGTARAGLQPRADMAAPPMPPQPPRAHGQHYGHHHHQLPFLGHDGHHGGTLRVGQHHRNASDVLPGHWLQGGWGCYNLSDWHQGTHVCHTKHMDFWCVEHDRPPPATPTSLTTAANSTTAATPATAPPPCHAGLNDSCGGFLSGCGPMRLRHGADTRCGRLICGLSTTAQYPPTRFGCAMRWGLPPWELVVLTARPEDGWTCRGVPAHPGTRCPELVSPMGRATCSPASALWLATANALSLDHAFAAFVLLVPWVLIFMVCRRACRRRGAAAALTAVVLQGYNPPAYGEEAFTYLCTAPGCATQTPVPVRLAGVRFESKIVDGGCFAPWDLEATGACICEIPTDVSCEGLGAWVPTAPCARIWNGTQRACTFWAVNAYSSGGYAQLASYFNPGGSYYKQYHPTACEVEPAFGHSDAACWGFPTDTVMSVFALASYVQHPHKTVRVKFHTETRTVWQLSVAGVSCNVTTEHPFCNTPHGQLEVQVPPDPGDLVEYIMNYTGNQQSRWGLGSPNCHGPDWASPVCQRHSPDCSRLVGATPERPRLRLVDADDPLLRTAPGPGEVWVTPVIGSQARKCGLHIRAGPYGHATVEMPEWIHAHTTSDPWHPPGPLGLKFKTVRPVALPRALAPPRNVRVTGCYQCGTPALVEGLAPGGGNCHLTVNGEDVGAFPPGKFVTAALLNTPPPYQVSCGGESDRASARVIDPAAQSFTGVVYGTHTTAVSETRQTWAEWAAAHWWQLTLGAICALLLAGLLACCAKCLYYLRGAIAPR.

The interval methionine 1–alanine 131 is disordered. Low complexity predominate over residues alanine 18–serine 34. Residues glycine 30 to glycine 69 form a human C1QBP/SF2P32-binding region. Phosphoserine; by host is present on serine 46. Residues proline 59–glycine 69 show a composition bias toward basic residues. Positions glutamine 70–serine 87 are enriched in basic and acidic residues. The span at alanine 93–proline 107 shows a compositional bias: pro residues. A disulfide bridge connects residues cysteine 153 and cysteine 197. The functions as E2 signal peptide stretch occupies residues glycine 279–alanine 300. At glycine 301 to serine 534 the chain is on the extracellular side. 4 N-linked (GlcNAc...) asparagine; by host glycosylation sites follow: asparagine 353, asparagine 371, asparagine 410, and asparagine 429. Residues leucine 535–cysteine 555 traverse the membrane as a helical segment. Residues arginine 556–glycine 582 are Cytoplasmic-facing. Residues glycine 563–glycine 582 are functions as E1 signal peptide. The Extracellular portion of the chain corresponds to glutamate 583–histidine 1028. Cystine bridges form between cysteine 590-cysteine 595, cysteine 619-cysteine 824, cysteine 641-cysteine 653, cysteine 699-cysteine 712, cysteine 758-cysteine 767, cysteine 807-cysteine 817, cysteine 931-cysteine 934, and cysteine 950-cysteine 983. N-linked (GlcNAc...) asparagine; by host glycosylation occurs at asparagine 658. 2 residues coordinate Ca(2+): asparagine 670 and alanine 671. Residues aspartate 718 and threonine 719 each coordinate Ca(2+). N-linked (GlcNAc...) asparagine; by host glycans are attached at residues asparagine 759 and asparagine 791. Threonine 1011 and threonine 1012 each carry an O-linked (GalNAc...) threonine; by host glycan. The helical transmembrane segment at tryptophan 1029–cysteine 1049 threads the bilayer. Over alanine 1050 to arginine 1063 the chain is Cytoplasmic.

In terms of assembly, homodimer; further assembles into homooligomer. Interacts with human C1QBP. Interacts (via N-terminus) with protease/methyltransferase p150. Heterodimer with spike glycoprotein E2. As to quaternary structure, heterodimer with spike glycoprotein E1. In terms of processing, structural polyprotein: Specific enzymatic cleavages in vivo yield mature proteins. Two signal peptidase-mediated cleavages within the polyprotein produce the structural proteins capsid, E2, and E1. The E2 signal peptide remains attached to the C-terminus of the capsid protein after cleavage by the signal peptidase. Another signal peptide at E2 C-terminus directs E1 to the ER, with a similar mechanism. Contains three N-linked oligosaccharides. Post-translationally, capsid is phosphorylated on Ser-46 by host. This phosphorylation negatively regulates capsid protein RNA-binding activity. Dephosphorylated by human PP1A.

It is found in the virion. The protein localises to the host cytoplasm. The protein resides in the host mitochondrion. Its subcellular location is the virion membrane. It localises to the host Golgi apparatus membrane. Its function is as follows. Capsid protein interacts with genomic RNA and assembles into icosahedric core particles 65-70 nm in diameter. The resulting nucleocapsid eventually associates with the cytoplasmic domain of E2 at the cell membrane, leading to budding and formation of mature virions from host Golgi membranes. Phosphorylation negatively regulates RNA-binding activity, possibly delaying virion assembly during the viral replication phase. Capsid protein dimerizes and becomes disulfide-linked in the virion. Modulates genomic RNA replication. Modulates subgenomic RNA synthesis by interacting with human C1QBP/SF2P32. Induces both perinuclear clustering of mitochondria and the formation of electron-dense intermitochondrial plaques, both hallmarks of rubella virus infected cells. Induces apoptosis when expressed in transfected cells. Functionally, responsible for viral attachment to target host cell, by binding to the cell receptor. Its transport to the plasma membrane depends on interaction with E1 protein. The surface glycoproteins display an irregular helical organization and a pseudo-tetrameric inner nucleocapsid arrangement. In terms of biological role, class II viral fusion protein. Fusion activity is inactive as long as E1 is bound to E2 in mature virion. After virus attachment to target cell and clathrin-mediated endocytosis, acidification of the endosome would induce dissociation of E1/E2 heterodimer and concomitant trimerization of the E1 subunits. This E1 homotrimer is fusion active, and promotes release of viral nucleocapsid in cytoplasm after endosome and viral membrane fusion. The cytoplasmic tail of spike glycoprotein E1 modulates virus release. The surface glycoproteins display an irregular helical organization and a pseudo-tetrameric inner nucleocapsid arrangement. The sequence is that of Structural polyprotein from Homo sapiens (Human).